A 73-amino-acid polypeptide reads, in one-letter code: Conotoxin Leo-O2 (73 aa).

An N-terminal signal peptide occupies residues Met1–Ala22. Positions Asp23–Arg47 are excised as a propeptide. Intrachain disulfides connect Cys49–Cys59, Cys56–Cys64, and Cys58–Cys69.

The protein belongs to the conotoxin O1 superfamily. Expressed by the venom duct.

It localises to the secreted. The sequence is that of Conotoxin Leo-O2 from Conus leopardus (Leopard cone).